The sequence spans 422 residues: MHIHKIQAREILDSRGNPTIEADVILTTGIIGRASVPSGASTGSREACELRDNDPKRYAGKGVQKAVKHVNNEINQALQGLSVEDQENLDRILCQLDNTENKSHLGANAILATSLACARARALSLNQPLYITLNQGDMMTMPVPMMNILNGGAHADNNVDIQEFMIMPIGAPDFPVALQMGTEIFHVLKSVLKKQGLNTAVGDEGGFAPNIQSNRQALDLLSEAIEKAGFRLGEDIVFALDVAASELFNEGFYHMYSENQKFDSHQLIEYYANLISSYPIVSIEDGLDEKDWSGWKQLTTHLGNKVQLVGDDLFVTNPKILREGIAQGIANAILIKVNQIGTLSETRQAIKLAYDNGYRCVMSHRSGETEDTFIADLAVASGCGQIKTGSLCRTDRTAKYNQLLRINELASLPYAGKNILKR.

Residue glutamine 162 coordinates (2R)-2-phosphoglycerate. Glutamate 204 acts as the Proton donor in catalysis. Residues aspartate 241, glutamate 284, and aspartate 311 each coordinate Mg(2+). (2R)-2-phosphoglycerate is bound by residues lysine 336, arginine 365, serine 366, and lysine 387. The Proton acceptor role is filled by lysine 336.

It belongs to the enolase family. In terms of assembly, component of the RNA degradosome, a multiprotein complex involved in RNA processing and mRNA degradation. Mg(2+) is required as a cofactor.

The protein resides in the cytoplasm. It localises to the secreted. It is found in the cell surface. It catalyses the reaction (2R)-2-phosphoglycerate = phosphoenolpyruvate + H2O. It functions in the pathway carbohydrate degradation; glycolysis; pyruvate from D-glyceraldehyde 3-phosphate: step 4/5. In terms of biological role, catalyzes the reversible conversion of 2-phosphoglycerate (2-PG) into phosphoenolpyruvate (PEP). It is essential for the degradation of carbohydrates via glycolysis. The sequence is that of Enolase from Legionella pneumophila (strain Paris).